The sequence spans 413 residues: Serine hydroxymethyltransferase (413 aa).

(6S)-5,6,7,8-tetrahydrofolate is bound by residues leucine 117 and 121-123 (GHL). The residue at position 226 (lysine 226) is an N6-(pyridoxal phosphate)lysine. (6S)-5,6,7,8-tetrahydrofolate is bound by residues glutamate 239 and 349-351 (SPF).

It belongs to the SHMT family. As to quaternary structure, homodimer. Requires pyridoxal 5'-phosphate as cofactor.

It is found in the cytoplasm. The enzyme catalyses (6R)-5,10-methylene-5,6,7,8-tetrahydrofolate + glycine + H2O = (6S)-5,6,7,8-tetrahydrofolate + L-serine. It participates in one-carbon metabolism; tetrahydrofolate interconversion. The protein operates within amino-acid biosynthesis; glycine biosynthesis; glycine from L-serine: step 1/1. In terms of biological role, catalyzes the reversible interconversion of serine and glycine with tetrahydrofolate (THF) serving as the one-carbon carrier. This reaction serves as the major source of one-carbon groups required for the biosynthesis of purines, thymidylate, methionine, and other important biomolecules. Also exhibits THF-independent aldolase activity toward beta-hydroxyamino acids, producing glycine and aldehydes, via a retro-aldol mechanism. This Bacillus cereus (strain ATCC 10987 / NRS 248) protein is Serine hydroxymethyltransferase.